The sequence spans 966 residues: Replication protein 1a (966 aa).

Positions 49-381 (RNKLSVAECD…VIINGQSIMS (333 aa)) are methyltransferase. The 191-residue stretch at 71 to 261 (NLTHEYTAPH…HDWKNLGSFL (191 aa)) folds into the Alphavirus-like MT domain. The (+)RNA virus helicase ATP-binding domain maps to 660-815 (DKTCSCANAK…NIEYDKRDIV (156 aa)). The interval 687 to 951 (MVDGVAGCGK…TRHKRTFEYL (265 aa)) is ATP-dependent helicase. Residue 690–697 (GVAGCGKT) participates in ATP binding. One can recognise a (+)RNA virus helicase C-terminal domain in the interval 816–966 (SKTFRCPQDV…GGDLISFYVT (151 aa)).

It belongs to the bromoviridae replication protein 1a family.

The protein localises to the host endoplasmic reticulum membrane. In terms of biological role, involved in the virus replication. Contains a helicase domain and a methyltransferase domain. The methyltransferase domain is probably involved in viral RNA capping. This is Replication protein 1a from Vicia faba (Broad bean).